A 609-amino-acid polypeptide reads, in one-letter code: Actin-interacting protein 1-2 (609 aa).

12 WD repeats span residues 2-42 (ELSE…VTLD), 54-93 (EHAYPATVARYSPNGEWIASGDVSGTVRIWGAYNDHVLKN), 97-141 (VLAG…GEFD), 142-182 (GHSR…FKLS), 185-224 (EHSNFVNCVRFAPDGSKFITVSSDKKGIIYDGKTCEILGE), 230-269 (GHKGSIYAVSWSPDGKQVLTVSADKSAKIWDISDNGSGSL), 277-318 (GSSG…KSPF), 322-362 (GHMK…CGKL), 445-484 (NLGFIVTALAVTPDGTEAVIGGQDGKLHLYSINGDSLTEE), 489-528 (RHRGAISVIRYSPDLSMFASADLNREAVVWDRVSREMKLK), 532-571 (YHSARINCLAWSPNSTMVATGSLDTCVIVYEVDKPASSRM), and 576-609 (AHLGGVYGLGFADDSHVVSSGEDACIRVWSFTPQ).

In terms of tissue distribution, expressed in leaves, stems, flower buds and flowers.

Binds actin. Enhances the F-actin depolymerization activity of actin-depolymerizing factor (ADF) proteins. This is Actin-interacting protein 1-2 from Arabidopsis thaliana (Mouse-ear cress).